Here is a 1399-residue protein sequence, read N- to C-terminus: DNA-directed RNA polymerase subunit beta' (1399 aa).

Zn(2+) contacts are provided by C70, C72, C85, and C88. Residues D460, D462, and D464 each contribute to the Mg(2+) site. Zn(2+)-binding residues include C814, C888, C895, and C898.

This sequence belongs to the RNA polymerase beta' chain family. As to quaternary structure, the RNAP catalytic core consists of 2 alpha, 1 beta, 1 beta' and 1 omega subunit. When a sigma factor is associated with the core the holoenzyme is formed, which can initiate transcription. It depends on Mg(2+) as a cofactor. Zn(2+) serves as cofactor.

The enzyme catalyses RNA(n) + a ribonucleoside 5'-triphosphate = RNA(n+1) + diphosphate. Functionally, DNA-dependent RNA polymerase catalyzes the transcription of DNA into RNA using the four ribonucleoside triphosphates as substrates. This is DNA-directed RNA polymerase subunit beta' from Pseudomonas putida (strain ATCC 47054 / DSM 6125 / CFBP 8728 / NCIMB 11950 / KT2440).